We begin with the raw amino-acid sequence, 1103 residues long: Isoleucine--tRNA ligase (1103 aa).

Residues 53 to 63 (PFANGLPHYGH) carry the 'HIGH' region motif. The 'KMSKS' region motif lies at 628–632 (KLSKR). Lys-631 lines the ATP pocket.

This sequence belongs to the class-I aminoacyl-tRNA synthetase family. IleS type 2 subfamily. Monomer. Requires Zn(2+) as cofactor.

Its subcellular location is the cytoplasm. It carries out the reaction tRNA(Ile) + L-isoleucine + ATP = L-isoleucyl-tRNA(Ile) + AMP + diphosphate. Functionally, catalyzes the attachment of isoleucine to tRNA(Ile). As IleRS can inadvertently accommodate and process structurally similar amino acids such as valine, to avoid such errors it has two additional distinct tRNA(Ile)-dependent editing activities. One activity is designated as 'pretransfer' editing and involves the hydrolysis of activated Val-AMP. The other activity is designated 'posttransfer' editing and involves deacylation of mischarged Val-tRNA(Ile). This is Isoleucine--tRNA ligase from Rickettsia akari (strain Hartford).